A 129-amino-acid chain; its full sequence is Small ribosomal subunit protein uS13m (129 aa).

The segment at 92-129 (HQDGSPLRGQRTHTNARTARKQIRKGNERRLPKEQATD) is disordered. Residues 116–129 (KGNERRLPKEQATD) show a composition bias toward basic and acidic residues.

This sequence belongs to the universal ribosomal protein uS13 family. As to quaternary structure, part of the small ribosomal subunit.

The protein localises to the mitochondrion. Functionally, located at the top of the head of the small subunit, it contacts several helices of the 18S rRNA. The polypeptide is Small ribosomal subunit protein uS13m (RPS13) (Zea mays (Maize)).